Consider the following 352-residue polypeptide: Maleylacetate reductase (352 aa).

NAD(+) is bound by residues 93–94 and 115–119; these read GS and TTYAG.

This sequence belongs to the iron-containing alcohol dehydrogenase family. The maleylacetate reductase family of enzymes does not require any metal ion for activity, despite being related to the family III metal-dependent polyol dehydrogenases. serves as cofactor.

The enzyme catalyses 3-oxoadipate + NAD(+) = maleylacetate + NADH + H(+). It functions in the pathway xenobiotic degradation; gamma-hexachlorocyclohexane degradation. Catalyzes the NADH-dependent reduction of maleylacetate to beta-ketoadipate, a step in the degradation of gamma-hexachlorocyclohexane (gamma-HCH or lindane). Has an essential role in this assimilation pathway that allows S.japonicum UT26 to grow on gamma-HCH as the sole source of carbon and energy. The chain is Maleylacetate reductase from Sphingobium indicum (strain DSM 16413 / CCM 7287 / MTCC 6362 / UT26 / NBRC 101211 / UT26S) (Sphingobium japonicum).